Reading from the N-terminus, the 223-residue chain is Probable transaldolase (223 aa).

Residue Lys91 is the Schiff-base intermediate with substrate of the active site.

This sequence belongs to the transaldolase family. Type 3B subfamily.

It is found in the cytoplasm. It catalyses the reaction D-sedoheptulose 7-phosphate + D-glyceraldehyde 3-phosphate = D-erythrose 4-phosphate + beta-D-fructose 6-phosphate. The protein operates within carbohydrate degradation; pentose phosphate pathway; D-glyceraldehyde 3-phosphate and beta-D-fructose 6-phosphate from D-ribose 5-phosphate and D-xylulose 5-phosphate (non-oxidative stage): step 2/3. Functionally, transaldolase is important for the balance of metabolites in the pentose-phosphate pathway. In Prosthecochloris aestuarii (strain DSM 271 / SK 413), this protein is Probable transaldolase.